A 451-amino-acid polypeptide reads, in one-letter code: Multidrug export protein MepA (451 aa).

12 helical membrane passes run 26-46 (MIGT…IGFL), 54-74 (AISL…LFGV), 97-117 (SFSI…TLPF), 139-159 (LKVM…EQFA), 170-190 (IGML…IFGF), 194-214 (VVGA…FFIV), 245-265 (IPAF…NLFL), 282-302 (LVQF…PLIA), 318-338 (AVIM…FTIG), 355-375 (ATFI…GFLF), 397-417 (AIII…GVIW), and 418-438 (SLLI…YLLR).

It belongs to the multi antimicrobial extrusion (MATE) (TC 2.A.66.1) family. MepA subfamily.

Its subcellular location is the cell membrane. Its function is as follows. Multidrug resistance efflux protein. In Staphylococcus aureus (strain MSSA476), this protein is Multidrug export protein MepA (mepA).